The sequence spans 184 residues: Probable DNA-directed RNA polymerase subunit delta (184 aa).

Residues 14-82 enclose the HTH HARE-type domain; sequence KSFIDMAHTL…GENNWGLRDW (69 aa). Positions 114–184 are disordered; that stretch reads LLGEEEEEID…FNDDPDDDKI (71 aa). Residues 117-184 are compositionally biased toward acidic residues; sequence EEEEEIDDQE…FNDDPDDDKI (68 aa).

The protein belongs to the RpoE family. RNAP is composed of a core of 2 alpha, a beta and a beta' subunits. The core is associated with a delta subunit and one of several sigma factors.

Participates in both the initiation and recycling phases of transcription. In the presence of the delta subunit, RNAP displays an increased specificity of transcription, a decreased affinity for nucleic acids, and an increased efficiency of RNA synthesis because of enhanced recycling. This is Probable DNA-directed RNA polymerase subunit delta from Staphylococcus carnosus (strain TM300).